The sequence spans 367 residues: Peroxidase 1 (367 aa).

Residues 1–33 (MAKESKLTAGVAAALTVVAACALCLLLPATARA) form the signal peptide. A Pyrrolidone carboxylic acid modification is found at Gln34. 4 disulfide bridges follow: Cys44–Cys125, Cys77–Cys82, Cys131–Cys335, and Cys209–Cys244. His75 (proton acceptor) is an active-site residue. Ca(2+) contacts are provided by Asp76, Val79, Gly81, Asp83, and Ser85. N-linked (GlcNAc...) asparagine glycosylation occurs at Asn164. Residue Pro172 participates in substrate binding. His202 serves as a coordination point for heme b. Thr203 is a binding site for Ca(2+). 2 N-linked (GlcNAc...) asparagine glycosylation sites follow: Asn218 and Asn247. 3 residues coordinate Ca(2+): Asp259, Thr262, and Asp267. N-linked (GlcNAc...) asparagine glycosylation occurs at Asn303.

This sequence belongs to the peroxidase family. Classical plant (class III) peroxidase subfamily. The cofactor is heme b. Ca(2+) is required as a cofactor. Expressed in the root tip meristems.

It localises to the secreted. The protein resides in the vacuole. It carries out the reaction 2 a phenolic donor + H2O2 = 2 a phenolic radical donor + 2 H2O. Removal of H(2)O(2), oxidation of toxic reductants, biosynthesis and degradation of lignin, suberization, auxin catabolism, response to environmental stresses such as wounding, pathogen attack and oxidative stress. These functions might be dependent on each isozyme/isoform in each plant tissue. The polypeptide is Peroxidase 1 (PER1) (Zea mays (Maize)).